A 130-amino-acid polypeptide reads, in one-letter code: Small ribosomal subunit protein uS8 (130 aa).

This sequence belongs to the universal ribosomal protein uS8 family. In terms of assembly, part of the 30S ribosomal subunit. Contacts proteins S5 and S12.

Functionally, one of the primary rRNA binding proteins, it binds directly to 16S rRNA central domain where it helps coordinate assembly of the platform of the 30S subunit. The chain is Small ribosomal subunit protein uS8 from Haemophilus ducreyi (strain 35000HP / ATCC 700724).